A 331-amino-acid chain; its full sequence is UDP-GalNAc:beta-1,3-N-acetylgalactosaminyltransferase 1 (331 aa).

At 1 to 20 (MAPALPITLPSKMSLRSLKW) the chain is on the cytoplasmic side. A helical; Signal-anchor for type II membrane protein membrane pass occupies residues 21–43 (SLLLLSLLSFLVMWYLSLPHYNV). The Lumenal portion of the chain corresponds to 44–331 (IERVNWMYFY…VMLRNTTCHY (288 aa)). N-linked (GlcNAc...) asparagine glycosylation is found at Asn72, Asn154, Asn198, Asn212, and Asn326.

The protein belongs to the glycosyltransferase 31 family. Mg(2+) serves as cofactor.

Its subcellular location is the golgi apparatus membrane. It catalyses the reaction a globoside Gb3Cer (d18:1(4E)) + UDP-N-acetyl-alpha-D-galactosamine = a globoside Gb4Cer (d18:1(4E)) + UDP + H(+). The protein operates within protein modification; protein glycosylation. Transfers N-acetylgalactosamine onto globotriaosylceramide. Plays a critical role in preimplantation stage embryonic development. In Sus scrofa (Pig), this protein is UDP-GalNAc:beta-1,3-N-acetylgalactosaminyltransferase 1 (B3GALNT1).